The following is a 934-amino-acid chain: Serine/threonine-protein kinase PknD (934 aa).

The region spanning 4–296 (YELIRLIGKG…ELRQALQPYL (293 aa)) is the Protein kinase domain. ATP contacts are provided by residues 10-18 (IGKGGMGEV) and Lys-33. Asp-138 functions as the Proton acceptor in the catalytic mechanism.

Belongs to the protein kinase superfamily. Ser/Thr protein kinase family. In terms of processing, autophosphorylated on serine and threonine residues.

It catalyses the reaction L-seryl-[protein] + ATP = O-phospho-L-seryl-[protein] + ADP + H(+). The catalysed reaction is L-threonyl-[protein] + ATP = O-phospho-L-threonyl-[protein] + ADP + H(+). Its function is as follows. Together with the serine/threonine kinase Pkn1, may play a role in the specific interactions with host proteins during intracellular growth. The chain is Serine/threonine-protein kinase PknD from Chlamydia trachomatis serovar A (strain ATCC VR-571B / DSM 19440 / HAR-13).